The following is a 154-amino-acid chain: Large ribosomal subunit protein uL13 (154 aa).

Belongs to the universal ribosomal protein uL13 family. In terms of assembly, part of the 50S ribosomal subunit.

This protein is one of the early assembly proteins of the 50S ribosomal subunit, although it is not seen to bind rRNA by itself. It is important during the early stages of 50S assembly. This chain is Large ribosomal subunit protein uL13, found in Rhodopseudomonas palustris (strain BisB5).